Consider the following 512-residue polypeptide: Protein SHC1 (512 aa).

Positions 101-113 (EQDEFENDVEDDA) are enriched in acidic residues. Disordered regions lie at residues 101-122 (EQDEFENDVEDDASSSLKEKSQ) and 144-164 (DGNSEFHDFAEPPPSQNESVA). 4 Sel1-like repeats span residues 318–353 (PDAQYLLGDAYSSGVFGKIKNRRAFLLFSAAAKRMH), 354–389 (IESVYRTAICYECGLGVTRNAPKAVNFLTFAATKNH), 390–429 (PAAMYKLGVYSYHGLMGLPDDILTKMDGYRWLRRATSMAS), and 433–470 (CGAPFELANIYMTGYKDLIISDPDYAMALYEKAAALGH).

The protein belongs to the SKT5 family.

It is found in the cytoplasm. The protein localises to the cytoplasmic granule membrane. In terms of biological role, required for the activation of chitin synthase III (CHS3) activity during the sporulation process. This chain is Protein SHC1 (SHC1), found in Saccharomyces cerevisiae (strain ATCC 204508 / S288c) (Baker's yeast).